The sequence spans 379 residues: RIB43A-like with coiled-coils protein 1 (379 aa).

Positions 1–21 (MYNIKQSTDTKEAAAIEARRN) are disordered. Positions 8–21 (TDTKEAAAIEARRN) are enriched in basic and acidic residues. Coiled-coil stretches lie at residues 82–111 (KEEADRTRQLAKKVQEFREQKQQLKNGREF) and 216–304 (NANK…QAEK).

The protein belongs to the RIB43A family. In terms of assembly, microtubule inner protein component of sperm flagellar doublet microtubules.

It is found in the cytoplasm. The protein localises to the cytoskeleton. Its subcellular location is the flagellum axoneme. In Homo sapiens (Human), this protein is RIB43A-like with coiled-coils protein 1 (RIBC1).